A 429-amino-acid chain; its full sequence is Glutamate-1-semialdehyde 2,1-aminomutase (429 aa).

Position 267 is an N6-(pyridoxal phosphate)lysine (lysine 267).

Belongs to the class-III pyridoxal-phosphate-dependent aminotransferase family. HemL subfamily. In terms of assembly, homodimer. Requires pyridoxal 5'-phosphate as cofactor.

The protein resides in the cytoplasm. The enzyme catalyses (S)-4-amino-5-oxopentanoate = 5-aminolevulinate. It participates in porphyrin-containing compound metabolism; protoporphyrin-IX biosynthesis; 5-aminolevulinate from L-glutamyl-tRNA(Glu): step 2/2. The protein is Glutamate-1-semialdehyde 2,1-aminomutase of Anaeromyxobacter sp. (strain Fw109-5).